The chain runs to 281 residues: Secretory carrier-associated membrane protein 5 (281 aa).

The tract at residues 1–49 is disordered; sequence MHHDPNPFDEGADDNPFSNGGGGGARRGGGGGGGGGGGGGKSQFSFGFG. At 1-139 the chain is on the cytoplasmic side; it reads MHHDPNPFDE…AQKLQYLAFA (139 aa). Residues 19 to 49 are compositionally biased toward gly residues; that stretch reads NGGGGGARRGGGGGGGGGGGGGKSQFSFGFG. A coiled-coil region spans residues 76 to 102; it reads KELLQWEADLKRREADIRRREEALKSA. The next 4 helical transmembrane spans lie at 140–160, 167–187, 202–222, and 250–270; these read SWLGIVLCLFWNFIAVIVCWI, LFFLATIYGMLGMPLSYLMWY, FGWFFLCYMLHIAFCVFAAIA, and IFYFVGFALFCLETLVSIWVL. Residues 271-281 lie on the Cytoplasmic side of the membrane; the sequence is QKVYMYFRGHK.

Belongs to the SCAMP family.

The protein localises to the cell membrane. It localises to the cytoplasmic vesicle. It is found in the secretory vesicle membrane. In terms of biological role, probably involved in membrane trafficking. This is Secretory carrier-associated membrane protein 5 (SCAMP5) from Oryza sativa subsp. japonica (Rice).